Reading from the N-terminus, the 529-residue chain is Arginine--tRNA ligase (529 aa).

A 'HIGH' region motif is present at residues 113-123 (ANPTGPLHIGH).

It belongs to the class-I aminoacyl-tRNA synthetase family. Monomer.

The protein resides in the cytoplasm. The enzyme catalyses tRNA(Arg) + L-arginine + ATP = L-arginyl-tRNA(Arg) + AMP + diphosphate. The chain is Arginine--tRNA ligase from Aliarcobacter butzleri (strain RM4018) (Arcobacter butzleri).